The sequence spans 257 residues: Granzyme M (257 aa).

The signal sequence occupies residues 1–23; sequence MEACVSSLLVLALGALSVGSSFG. Residues 24–25 constitute a propeptide, activation peptide; that stretch reads TQ. The region spanning 26–254 is the Peptidase S1 domain; sequence IIGGREVIPH…YVSWIRKVTG (229 aa). Cysteine 51 and cysteine 67 are joined by a disulfide. Catalysis depends on charge relay system residues histidine 66 and aspartate 111. 3 cysteine pairs are disulfide-bonded: cysteine 145/cysteine 213, cysteine 176/cysteine 192, and cysteine 203/cysteine 230. An N-linked (GlcNAc...) asparagine glycan is attached at asparagine 177. The Charge relay system role is filled by serine 207.

It belongs to the peptidase S1 family. Granzyme subfamily. Highly and constitutively expressed in activated natural killer (NK) cells.

Its subcellular location is the secreted. The protein resides in the cytoplasmic granule. Functionally, cleaves peptide substrates after methionine, leucine, and norleucine. Physiological substrates include EZR, alpha-tubulins and the apoptosis inhibitor BIRC5/Survivin. Promotes caspase activation and subsequent apoptosis of target cells. This Homo sapiens (Human) protein is Granzyme M (GZMM).